Consider the following 695-residue polypeptide: Nucleoprotein (695 aa).

Coiled coils occupy residues 316 to 341 and 372 to 399; these read VNVG…RRHE and QTLA…VEDQ. The tract at residues 424-611 is disordered; the sequence is QARPMNRPTA…SPSAPQEDTR (188 aa). Positions 438 to 447 are enriched in basic and acidic residues; that stretch reads VDDKIEHEST. 2 stretches are compositionally biased toward polar residues: residues 495–505 and 537–552; these read RQSQDLNNSQG and TTDS…SDNE. The PTAP/PSAP motif motif lies at 603–606; sequence PSAP.

This sequence belongs to the filoviruses nucleoprotein family. As to quaternary structure, homooligomer. Homomultimerizes to form the nucleocapsid. Binds to viral genomic RNA. Interacts with VP35 and VP30 to form the nucleocapsid. Also interacts with VP24 and VP40. Post-translationally, phosphorylated.

Its subcellular location is the virion. It localises to the host cytoplasm. Functionally, encapsidates the genome, protecting it from nucleases. The encapsidated genomic RNA is termed the nucleocapsid and serves as template for transcription and replication. During replication, encapsidation by NP is coupled to RNA synthesis and all replicative products are resistant to nucleases. The sequence is that of Nucleoprotein (NP) from Chlorocebus aethiops (Green monkey).